Consider the following 418-residue polypeptide: D-amino acid dehydrogenase (418 aa).

Residue 3–17 (VLILGSGVVGVATAY) coordinates FAD.

This sequence belongs to the DadA oxidoreductase family. FAD serves as cofactor.

It carries out the reaction a D-alpha-amino acid + A + H2O = a 2-oxocarboxylate + AH2 + NH4(+). Its pathway is amino-acid degradation; D-alanine degradation; NH(3) and pyruvate from D-alanine: step 1/1. Oxidative deamination of D-amino acids. The polypeptide is D-amino acid dehydrogenase (Granulibacter bethesdensis (strain ATCC BAA-1260 / CGDNIH1)).